The following is a 688-amino-acid chain: Elongation factor G (688 aa).

Positions 8–282 (INFRNFGIMA…AVVDFLPSPV (275 aa)) constitute a tr-type G domain. Residues 17-24 (AHIDAGKT), 81-85 (DTPGH), and 135-138 (NKMD) contribute to the GTP site.

It belongs to the TRAFAC class translation factor GTPase superfamily. Classic translation factor GTPase family. EF-G/EF-2 subfamily.

The protein resides in the cytoplasm. In terms of biological role, catalyzes the GTP-dependent ribosomal translocation step during translation elongation. During this step, the ribosome changes from the pre-translocational (PRE) to the post-translocational (POST) state as the newly formed A-site-bound peptidyl-tRNA and P-site-bound deacylated tRNA move to the P and E sites, respectively. Catalyzes the coordinated movement of the two tRNA molecules, the mRNA and conformational changes in the ribosome. The polypeptide is Elongation factor G (fusA) (Mycoplasma pneumoniae (strain ATCC 29342 / M129 / Subtype 1) (Mycoplasmoides pneumoniae)).